We begin with the raw amino-acid sequence, 376 residues long: uncharacterized protein (376 aa).

2 helical membrane passes run glutamine 153–alanine 173 and histidine 188–tyrosine 208.

Its subcellular location is the membrane. This is an uncharacterized protein from Saccharomyces cerevisiae (strain ATCC 204508 / S288c) (Baker's yeast).